Reading from the N-terminus, the 917-residue chain is PAX3- and PAX7-binding protein 1 (917 aa).

Residues 1–11 are compositionally biased toward basic residues; that stretch reads MFRKARRVNVR. Disordered stretches follow at residues 1-123, 143-205, and 229-275; these read MFRK…FKVK, LEKS…GAFS, and RKKR…RIVF. S16 carries the post-translational modification Phosphoserine. The span at 16–28 shows a compositional bias: acidic residues; it reads SEEEERERDEEQE. Composition is skewed to gly residues over residues 40–50 and 73–85; these read EEAGPGGGDRA and AEAG…GAEP. A Glycyl lysine isopeptide (Lys-Gly) (interchain with G-Cter in SUMO1); alternate cross-link involves residue K149. Residue K149 forms a Glycyl lysine isopeptide (Lys-Gly) (interchain with G-Cter in SUMO2); alternate linkage. Phosphoserine is present on residues S154, S155, and S158. A compositionally biased stretch (basic and acidic residues) spans 161-172; the sequence is PLDKTGHVKDTN. Over residues 183-193 the composition is skewed to acidic residues; the sequence is GEDEMDMESEK. A Phosphoserine modification is found at S191. Over residues 234 to 256 the composition is skewed to basic and acidic residues; sequence MARELGDFTPHDNEPGKGRLVRE. The segment covering 257–268 has biased composition (acidic residues); sequence DENDASDDEDDD. A phosphoserine mark is found at S262 and S295. Disordered regions lie at residues 362 to 381 and 530 to 564; these read SSDA…TPSN and AERE…EETS. The interval 378-558 is necessary and sufficient for interaction with PAX7; sequence TPSNEMTPVT…MADHLEGLSS (181 aa). A compositionally biased stretch (basic and acidic residues) spans 542 to 554; the sequence is AREQTGKMADHLE. S557 and S558 each carry phosphoserine. Phosphothreonine is present on T563.

Belongs to the GCF family. As to quaternary structure, interacts with PAX3 and PAX7. Interacts with WDR5; associates with a histone methyltransferase (HMT) complex composed at least of RBBP5, ASH2L, SET1, SET2 and KMT2A/MLL1, KMT2D/MLL2, KMT2C/MLL3 and KMT2B/MLL4 through direct interaction with WDR5. Ubiquitous.

Its subcellular location is the nucleus. Functionally, adapter protein linking the transcription factors PAX3 and PAX7 to the histone methylation machinery and involved in myogenesis. Associates with a histone methyltransferase complex that specifically mediates dimethylation and trimethylation of 'Lys-4' of histone H3. Mediates the recruitment of that complex to the transcription factors PAX3 and PAX7 on chromatin to regulate the expression of genes involved in muscle progenitor cells proliferation including ID3 and CDC20. The sequence is that of PAX3- and PAX7-binding protein 1 (PAXBP1) from Homo sapiens (Human).